Here is a 338-residue protein sequence, read N- to C-terminus: UPF0252 protein PF1496 (338 aa).

The chain crosses the membrane as a helical span at residues 100 to 120; sequence ILSMLFLVFILFPAFTSHIWS.

It belongs to the UPF0252 family.

The protein localises to the membrane. This chain is UPF0252 protein PF1496, found in Pyrococcus furiosus (strain ATCC 43587 / DSM 3638 / JCM 8422 / Vc1).